We begin with the raw amino-acid sequence, 556 residues long: Formate--tetrahydrofolate ligase (556 aa).

Residue 65–72 (TPAGEGKS) participates in ATP binding.

Belongs to the formate--tetrahydrofolate ligase family.

It carries out the reaction (6S)-5,6,7,8-tetrahydrofolate + formate + ATP = (6R)-10-formyltetrahydrofolate + ADP + phosphate. It participates in one-carbon metabolism; tetrahydrofolate interconversion. The protein is Formate--tetrahydrofolate ligase of Streptococcus equi subsp. zooepidemicus (strain MGCS10565).